Consider the following 385-residue polypeptide: Proliferation-associated protein A (385 aa).

The protein belongs to the peptidase M24 family.

The chain is Proliferation-associated protein A (prlA) from Dictyostelium discoideum (Social amoeba).